Here is a 154-residue protein sequence, read N- to C-terminus: TSET complex member tstD (154 aa).

It belongs to the adaptor complexes small subunit family. As to quaternary structure, component of the TSET complex, a heterohexamer composed of tstA, tstB, tstC, tstD, tstE and tstF, which may act in plasma membrane turnover. tstA, tstB, tstC and tstD are likely to be the core complex members with tstE and tstF acting as associated scaffold proteins.

The protein resides in the cell membrane. The protein localises to the cytoplasm. The sequence is that of TSET complex member tstD from Dictyostelium discoideum (Social amoeba).